Here is a 185-residue protein sequence, read N- to C-terminus: MSRLSIHPEGNTNATSPAEPLLESDDPAVIKAELAKRGIEFQHWPAKVKLHQNSIESDILAAYAVEIARVQADGRYPTVDAIRITPDHPDREALRQKFLAEHTHAEDEVRFFVEGRGLFCLHIGAEVLQVLCEQNDCINVPAGTRHWFDMGSKPQFCAVRFFDNPEGWIASFTGDAIAERFAKLP.

The interval 1-23 (MSRLSIHPEGNTNATSPAEPLLE) is disordered. Residues His-102, His-104, Glu-108, and His-146 each contribute to the Fe(2+) site. The Ni(2+) site is built by His-102, His-104, Glu-108, and His-146.

The protein belongs to the acireductone dioxygenase (ARD) family. In terms of assembly, monomer. It depends on Fe(2+) as a cofactor. The cofactor is Ni(2+).

The catalysed reaction is 1,2-dihydroxy-5-(methylsulfanyl)pent-1-en-3-one + O2 = 3-(methylsulfanyl)propanoate + CO + formate + 2 H(+). The enzyme catalyses 1,2-dihydroxy-5-(methylsulfanyl)pent-1-en-3-one + O2 = 4-methylsulfanyl-2-oxobutanoate + formate + 2 H(+). The protein operates within amino-acid biosynthesis; L-methionine biosynthesis via salvage pathway; L-methionine from S-methyl-5-thio-alpha-D-ribose 1-phosphate: step 5/6. Its function is as follows. Catalyzes 2 different reactions between oxygen and the acireductone 1,2-dihydroxy-3-keto-5-methylthiopentene (DHK-MTPene) depending upon the metal bound in the active site. Fe-containing acireductone dioxygenase (Fe-ARD) produces formate and 2-keto-4-methylthiobutyrate (KMTB), the alpha-ketoacid precursor of methionine in the methionine recycle pathway. Ni-containing acireductone dioxygenase (Ni-ARD) produces methylthiopropionate, carbon monoxide and formate, and does not lie on the methionine recycle pathway. This chain is Acireductone dioxygenase, found in Prochlorococcus marinus (strain MIT 9303).